We begin with the raw amino-acid sequence, 730 residues long: Transcription factor verF (730 aa).

The segment at 19–41 (YECSLCLKRYKRREHLFRHIGSH) adopts a C2H2-type 1 zinc-finger fold. The C2H2-type 2; atypical zinc-finger motif lies at 47–69 (YQCNSCDGAFQRADVLKRHLRTC). The segment at residues 83–109 (CDRCVRQKKACSSHQPCHSCAKKGAQC) is a DNA-binding region (zn(2)-C6 fungal-type). Positions 120-129 (RLSQHSSTNH) are enriched in polar residues. Positions 120–151 (RLSQHSSTNHTPKDQELSTQFTNPPPPPSTST) are disordered.

The protein resides in the nucleus. Transcription factor; part of the gene cluster that mediates the biosynthesis of the neurotoxin verrucosidin, a methylated alpha-pyrone polyketide that inhibits oxidative phosphorylation in mitochondria and thereby causes neurological diseases. In Penicillium polonicum, this protein is Transcription factor verF.